We begin with the raw amino-acid sequence, 364 residues long: Dual-specificity RNA methyltransferase RlmN (364 aa).

E91 serves as the catalytic Proton acceptor. A Radical SAM core domain is found at 102-337 (GTLRITQCLS…AIIRKSKGQD (236 aa)). C109 and C342 are joined by a disulfide. [4Fe-4S] cluster is bound by residues C116, C120, and C123. S-adenosyl-L-methionine is bound by residues 169–170 (GE), S201, 223–225 (SLH), and N299. The active-site S-methylcysteine intermediate is the C342.

This sequence belongs to the radical SAM superfamily. RlmN family. Requires [4Fe-4S] cluster as cofactor.

It is found in the cytoplasm. It catalyses the reaction adenosine(2503) in 23S rRNA + 2 reduced [2Fe-2S]-[ferredoxin] + 2 S-adenosyl-L-methionine = 2-methyladenosine(2503) in 23S rRNA + 5'-deoxyadenosine + L-methionine + 2 oxidized [2Fe-2S]-[ferredoxin] + S-adenosyl-L-homocysteine. The catalysed reaction is adenosine(37) in tRNA + 2 reduced [2Fe-2S]-[ferredoxin] + 2 S-adenosyl-L-methionine = 2-methyladenosine(37) in tRNA + 5'-deoxyadenosine + L-methionine + 2 oxidized [2Fe-2S]-[ferredoxin] + S-adenosyl-L-homocysteine. Its function is as follows. Specifically methylates position 2 of adenine 2503 in 23S rRNA and position 2 of adenine 37 in tRNAs. m2A2503 modification seems to play a crucial role in the proofreading step occurring at the peptidyl transferase center and thus would serve to optimize ribosomal fidelity. In Nitratidesulfovibrio vulgaris (strain DP4) (Desulfovibrio vulgaris), this protein is Dual-specificity RNA methyltransferase RlmN.